The following is a 157-amino-acid chain: MDVVMKLNNIFSGLPKKKKSKVLGRGIGCGKGKTSGRGHKGQKARSGVSINGFEGGQQSIFTRLPKRGFNSLPKNKYSIINLSLIQRLIDSGKIDNVSAITKEVLYNLGVISSVKQKIKILGDGKLNTTVCIEYDFISKSAKSQVTLLNSLSDSESK.

It belongs to the universal ribosomal protein uL15 family. Part of the 50S ribosomal subunit.

In terms of biological role, binds to the 23S rRNA. The protein is Large ribosomal subunit protein uL15 of Ehrlichia ruminantium (strain Welgevonden).